The following is a 356-amino-acid chain: Isopentenyl-diphosphate delta-isomerase (356 aa).

Substrate is bound at residue 8–9; it reads RK. Residues 66–68, Ser-96, and Asn-124 each bind FMN; that span reads AIT. A substrate-binding site is contributed by 96-98; that stretch reads SQR. Gln-160 provides a ligand contact to substrate. Glu-161 lines the Mg(2+) pocket. FMN-binding positions include Lys-201, Thr-231, 280–282, and 301–302; these read GIR and AL.

It belongs to the IPP isomerase type 2 family. Homooctamer. Dimer of tetramers. FMN serves as cofactor. NADPH is required as a cofactor. Requires Mg(2+) as cofactor.

The protein localises to the cytoplasm. The catalysed reaction is isopentenyl diphosphate = dimethylallyl diphosphate. Functionally, involved in the biosynthesis of isoprenoids. Catalyzes the 1,3-allylic rearrangement of the homoallylic substrate isopentenyl (IPP) to its allylic isomer, dimethylallyl diphosphate (DMAPP). The protein is Isopentenyl-diphosphate delta-isomerase of Methanococcus aeolicus (strain ATCC BAA-1280 / DSM 17508 / OCM 812 / Nankai-3).